A 212-amino-acid polypeptide reads, in one-letter code: 3,4-dihydroxy-2-butanone 4-phosphate synthase (212 aa).

D-ribulose 5-phosphate contacts are provided by residues Arg-37–Glu-38, Asp-42, Arg-150–Thr-154, and Glu-174. Mg(2+) is bound at residue Glu-38. A Mg(2+)-binding site is contributed by His-153.

It belongs to the DHBP synthase family. As to quaternary structure, homodimer. Requires Mg(2+) as cofactor. Mn(2+) is required as a cofactor.

The catalysed reaction is D-ribulose 5-phosphate = (2S)-2-hydroxy-3-oxobutyl phosphate + formate + H(+). It participates in cofactor biosynthesis; riboflavin biosynthesis; 2-hydroxy-3-oxobutyl phosphate from D-ribulose 5-phosphate: step 1/1. Functionally, catalyzes the conversion of D-ribulose 5-phosphate to formate and 3,4-dihydroxy-2-butanone 4-phosphate. The sequence is that of 3,4-dihydroxy-2-butanone 4-phosphate synthase from Shewanella piezotolerans (strain WP3 / JCM 13877).